The following is a 223-amino-acid chain: Deoxyribose-phosphate aldolase (223 aa).

Asp91 serves as the catalytic Proton donor/acceptor. The active-site Schiff-base intermediate with acetaldehyde is the Lys153. The Proton donor/acceptor role is filled by Lys183.

It belongs to the DeoC/FbaB aldolase family. DeoC type 1 subfamily.

It localises to the cytoplasm. It carries out the reaction 2-deoxy-D-ribose 5-phosphate = D-glyceraldehyde 3-phosphate + acetaldehyde. The protein operates within carbohydrate degradation; 2-deoxy-D-ribose 1-phosphate degradation; D-glyceraldehyde 3-phosphate and acetaldehyde from 2-deoxy-alpha-D-ribose 1-phosphate: step 2/2. In terms of biological role, catalyzes a reversible aldol reaction between acetaldehyde and D-glyceraldehyde 3-phosphate to generate 2-deoxy-D-ribose 5-phosphate. This is Deoxyribose-phosphate aldolase from Mycoplasmopsis synoviae (strain 53) (Mycoplasma synoviae).